A 632-amino-acid chain; its full sequence is Chaperone protein HtpG (632 aa).

The a; substrate-binding stretch occupies residues 1-339 (MTQQTMSFQA…SSDLPLNVSR (339 aa)). Residues 340-559 (EILQESRDVK…DNDMSGYLQR (220 aa)) form a b region. The interval 560–632 (MLKAAGQSAP…TNALLLSRAA (73 aa)) is c.

The protein belongs to the heat shock protein 90 family. In terms of assembly, homodimer.

It is found in the cytoplasm. In terms of biological role, molecular chaperone. Has ATPase activity. The protein is Chaperone protein HtpG of Burkholderia mallei (strain NCTC 10247).